A 216-amino-acid chain; its full sequence is Endoplasmic reticulum vesicle protein 25 (216 aa).

An N-terminal signal peptide occupies residues 1–20 (MASLKSLLSGFLLLAGAAQA). Over 21–185 (LKFDLEATSS…TNESTNNRVK (165 aa)) the chain is Lumenal. Residues 36-126 (RRCIRNFVNK…RRHVELDIDI (91 aa)) enclose the GOLD domain. The helical transmembrane segment at 186-206 (WFGMATTFLLIALWGWQIMYL) threads the bilayer. Residues 207–216 (RAYFRSKHLI) lie on the Cytoplasmic side of the membrane.

It belongs to the EMP24/GP25L family.

Its subcellular location is the endoplasmic reticulum membrane. The protein resides in the golgi apparatus membrane. In terms of biological role, constituent of COPII-coated endoplasmic reticulum-derived transport vesicles. Required for efficient transport of a subset of secretory proteins to the Golgi. Facilitates retrograde transport from the Golgi to the endoplasmic reticulum. The polypeptide is Endoplasmic reticulum vesicle protein 25 (erv-1) (Neurospora crassa (strain ATCC 24698 / 74-OR23-1A / CBS 708.71 / DSM 1257 / FGSC 987)).